Here is a 388-residue protein sequence, read N- to C-terminus: Succinate--CoA ligase [ADP-forming] subunit beta (388 aa).

The ATP-grasp domain maps to 9 to 244; that stretch reads KDLLSSYDIA…PSQENVRDVL (236 aa). Residues Lys-46, 53–55, Val-102, and Glu-107 contribute to the ATP site; that span reads GRG. Positions 199 and 213 each coordinate Mg(2+). Substrate is bound by residues Asn-264 and 321–323; that span reads GIM.

It belongs to the succinate/malate CoA ligase beta subunit family. As to quaternary structure, heterotetramer of two alpha and two beta subunits. Mg(2+) is required as a cofactor.

It catalyses the reaction succinate + ATP + CoA = succinyl-CoA + ADP + phosphate. It carries out the reaction GTP + succinate + CoA = succinyl-CoA + GDP + phosphate. It functions in the pathway carbohydrate metabolism; tricarboxylic acid cycle; succinate from succinyl-CoA (ligase route): step 1/1. Functionally, succinyl-CoA synthetase functions in the citric acid cycle (TCA), coupling the hydrolysis of succinyl-CoA to the synthesis of either ATP or GTP and thus represents the only step of substrate-level phosphorylation in the TCA. The beta subunit provides nucleotide specificity of the enzyme and binds the substrate succinate, while the binding sites for coenzyme A and phosphate are found in the alpha subunit. The polypeptide is Succinate--CoA ligase [ADP-forming] subunit beta (Chlamydia felis (strain Fe/C-56) (Chlamydophila felis)).